The primary structure comprises 201 residues: MAAQGARHGLQVRERCGVADTIVSGMAGRYATALFELATEAGAVDSVKADLDRLSALIAESADLARLVKSPVFSAEEQLKAISAVLDQAGISGLAGNFVRRVAQNRRLFALPRMVADYASLVAAMRGETTAQVTVPAPLSDAHFFALKDALAQQTGKDVILDVTVDPSILGGLIVKLGSRMVDASLKTKLNSIRHAMKEVR.

Belongs to the ATPase delta chain family. F-type ATPases have 2 components, F(1) - the catalytic core - and F(0) - the membrane proton channel. F(1) has five subunits: alpha(3), beta(3), gamma(1), delta(1), epsilon(1). F(0) has three main subunits: a(1), b(2) and c(10-14). The alpha and beta chains form an alternating ring which encloses part of the gamma chain. F(1) is attached to F(0) by a central stalk formed by the gamma and epsilon chains, while a peripheral stalk is formed by the delta and b chains.

The protein localises to the cell inner membrane. In terms of biological role, f(1)F(0) ATP synthase produces ATP from ADP in the presence of a proton or sodium gradient. F-type ATPases consist of two structural domains, F(1) containing the extramembraneous catalytic core and F(0) containing the membrane proton channel, linked together by a central stalk and a peripheral stalk. During catalysis, ATP synthesis in the catalytic domain of F(1) is coupled via a rotary mechanism of the central stalk subunits to proton translocation. This protein is part of the stalk that links CF(0) to CF(1). It either transmits conformational changes from CF(0) to CF(1) or is implicated in proton conduction. The protein is ATP synthase subunit delta of Xanthobacter autotrophicus (strain ATCC BAA-1158 / Py2).